The chain runs to 483 residues: Aspartyl/glutamyl-tRNA(Asn/Gln) amidotransferase subunit B (483 aa).

Belongs to the GatB/GatE family. GatB subfamily. As to quaternary structure, heterotrimer of A, B and C subunits.

The catalysed reaction is L-glutamyl-tRNA(Gln) + L-glutamine + ATP + H2O = L-glutaminyl-tRNA(Gln) + L-glutamate + ADP + phosphate + H(+). The enzyme catalyses L-aspartyl-tRNA(Asn) + L-glutamine + ATP + H2O = L-asparaginyl-tRNA(Asn) + L-glutamate + ADP + phosphate + 2 H(+). Its function is as follows. Allows the formation of correctly charged Asn-tRNA(Asn) or Gln-tRNA(Gln) through the transamidation of misacylated Asp-tRNA(Asn) or Glu-tRNA(Gln) in organisms which lack either or both of asparaginyl-tRNA or glutaminyl-tRNA synthetases. The reaction takes place in the presence of glutamine and ATP through an activated phospho-Asp-tRNA(Asn) or phospho-Glu-tRNA(Gln). The chain is Aspartyl/glutamyl-tRNA(Asn/Gln) amidotransferase subunit B from Anaeromyxobacter sp. (strain Fw109-5).